The sequence spans 86 residues: High affinity immunoglobulin epsilon receptor subunit gamma (86 aa).

The N-terminal stretch at 1-18 (MIPAVVLLLLLLVEQAAA) is a signal peptide. Topologically, residues 19–23 (LGEPQ) are extracellular. The chain crosses the membrane as a helical span at residues 24–44 (LCYILDAILFLYGIVLTLLYC). Residues 45–86 (RLKIQVRKAAIASYEKSDGVYTGLSTRNQETYETLKHEKPPQ) are Cytoplasmic-facing. In terms of domain architecture, ITAM spans 54-82 (AIASYEKSDGVYTGLSTRNQETYETLKHE). Phosphotyrosine is present on Y65. Phosphoserine is present on S69. Phosphotyrosine is present on Y76. T78 carries the phosphothreonine modification.

The protein belongs to the CD3Z/FCER1G family. As to quaternary structure, igE Fc receptor is a tetramer of an alpha chain, a beta chain, and two disulfide linked gamma chains. Associates with FCGR1A; forms a functional signaling complex. The signaling subunit of immunoglobulin gamma (IgG) Fc receptor complex. As a homodimer or a heterodimer of CD247 and FCER1G, associates with the ligand binding subunit FCGR3A to form a functional receptor complex. Associates with CLEC6A. Interacts with CLEC4E. Interacts (via ITAM domain) with SYK (via SH2 domains); activates SYK, enabling integrin-mediated activation of neutrophils and macrophages. Interacts with CSF2RB and recruits SYK in response to IL3 stimulation; this interaction is direct. Interacts with CD300LH; the interaction may be indirect. Interacts with CD300LD. Interacts with TARM1.

The protein localises to the cell membrane. Adapter protein containing an immunoreceptor tyrosine-based activation motif (ITAM) that transduces activation signals from various immunoreceptors. As a component of the high-affinity immunoglobulin E (IgE) receptor, mediates allergic inflammatory signaling in mast cells. As a constitutive component of interleukin-3 receptor complex, selectively mediates interleukin 4/IL4 production by basophils priming T-cells toward effector T-helper 2 subset. Associates with pattern recognition receptors CLEC4D and CLEC4E to form a functional signaling complex in myeloid cells. Binding of mycobacterial trehalose 6,6'-dimycolate (TDM) to this receptor complex leads to phosphorylation of ITAM, triggering activation of SYK, CARD9 and NF-kappa-B, consequently driving maturation of antigen-presenting cells and shaping antigen-specific priming of T-cells toward effector T-helper 1 and T-helper 17 cell subtypes. May function cooperatively with other activating receptors. Functionally linked to integrin beta-2/ITGB2-mediated neutrophil activation. Also involved in integrin alpha-2/ITGA2-mediated platelet activation. This chain is High affinity immunoglobulin epsilon receptor subunit gamma (FCER1G), found in Macaca fascicularis (Crab-eating macaque).